The sequence spans 484 residues: Ribosome biogenesis protein YTM1 (484 aa).

Residues 13–95 (VKVTFTTTEA…ESNLTLQYVR (83 aa)) form a ubiquitin-like (UBL) domain region. 7 WD repeats span residues 122–161 (SPSG…IATS), 168–206 (GHTA…HFSG), 216–255 (GHTG…APEA), 288–328 (IHSA…VVTT), 330–373 (STSH…ATTS), 379–419 (GHAN…PATQ), and 448–484 (GEGC…VVAE).

It belongs to the WD repeat WDR12/YTM1 family. In terms of assembly, component of the NOP7 complex, composed of ERB1, NOP7 and YTM1. The complex is held together by ERB1, which interacts with NOP7 via its N-terminal domain and with YTM1 via a high-affinity interaction between the seven-bladed beta-propeller domains of the 2 proteins. The NOP7 complex associates with the 66S pre-ribosome. Interacts (via UBL domain) with MDN1 (via VWFA/MIDAS domain).

The protein localises to the nucleus. It is found in the nucleolus. Its subcellular location is the nucleoplasm. In terms of biological role, component of the NOP7 complex, which is required for maturation of the 25S and 5.8S ribosomal RNAs and formation of the 60S ribosome. The chain is Ribosome biogenesis protein YTM1 from Chaetomium globosum (strain ATCC 6205 / CBS 148.51 / DSM 1962 / NBRC 6347 / NRRL 1970) (Soil fungus).